The chain runs to 313 residues: L-lactate dehydrogenase 1 (313 aa).

NAD(+)-binding positions include V15, D36, K41, Y66, and 80 to 81 (GA). Residues Q83 and R89 each contribute to the substrate site. NAD(+)-binding positions include S102, 119–121 (VSN), and S144. Residue 121 to 124 (NPVD) coordinates substrate. Substrate is bound at residue 149–152 (DTSR). Beta-D-fructose 1,6-bisphosphate is bound by residues R154 and H169. The active-site Proton acceptor is H176. Position 222 is a phosphotyrosine (Y222). T231 provides a ligand contact to substrate.

The protein belongs to the LDH/MDH superfamily. LDH family. As to quaternary structure, homotetramer.

The protein resides in the cytoplasm. The catalysed reaction is (S)-lactate + NAD(+) = pyruvate + NADH + H(+). Its pathway is fermentation; pyruvate fermentation to lactate; (S)-lactate from pyruvate: step 1/1. Allosterically activated by fructose 1,6-bisphosphate (FBP). Catalyzes the conversion of lactate to pyruvate. In Clostridium acetobutylicum (strain ATCC 824 / DSM 792 / JCM 1419 / IAM 19013 / LMG 5710 / NBRC 13948 / NRRL B-527 / VKM B-1787 / 2291 / W), this protein is L-lactate dehydrogenase 1.